The sequence spans 938 residues: Isoleucine--tRNA ligase (938 aa).

Positions 58–68 (PYANGSIHIGH) match the 'HIGH' region motif. N6-acetyllysine is present on K183. E561 contributes to the L-isoleucyl-5'-AMP binding site. The short motif at 602-606 (KMSKS) is the 'KMSKS' region element. K605 contacts ATP. Zn(2+) contacts are provided by C901, C904, C921, and C924.

This sequence belongs to the class-I aminoacyl-tRNA synthetase family. IleS type 1 subfamily. In terms of assembly, monomer. Zn(2+) is required as a cofactor.

It is found in the cytoplasm. The enzyme catalyses tRNA(Ile) + L-isoleucine + ATP = L-isoleucyl-tRNA(Ile) + AMP + diphosphate. Catalyzes the attachment of isoleucine to tRNA(Ile). As IleRS can inadvertently accommodate and process structurally similar amino acids such as valine, to avoid such errors it has two additional distinct tRNA(Ile)-dependent editing activities. One activity is designated as 'pretransfer' editing and involves the hydrolysis of activated Val-AMP. The other activity is designated 'posttransfer' editing and involves deacylation of mischarged Val-tRNA(Ile). In Escherichia coli O127:H6 (strain E2348/69 / EPEC), this protein is Isoleucine--tRNA ligase.